The following is a 574-amino-acid chain: Probable E3 ubiquitin-protein ligase ipaH4.5 (574 aa).

Positions 1-284 (MKPINNHSFF…YHGPQIYFSM (284 aa)) are interaction with target proteins. 10 LRR repeats span residues 63 to 82 (REPVLNLSLLKLRSLPPLPL), 83 to 104 (HIRELNISNNELISLPENSPLL), 105 to 122 (TELHVNGNNLNILPTLPS), 123 to 143 (QLIKLNISFNRNLSCLPSLPP), 144 to 165 (YLQSLSARFNSLETLPELPSTL), 166 to 183 (TILRIEGNRLTVLPELPH), 184 to 205 (RLQELFVSGNRLQELPEFPQSL), 206 to 223 (KYLKVGENQLRRLSRLPQ), 224 to 246 (ELLALDVSNNLLTSLPENIITLP), and 247 to 270 (ICTNVNISGNPLSTHVLQSLQRLT). Positions 285 to 292 (SDGQQNTL) are linker. The interval 293–574 (HRPLADAVTA…YRQLTDEVLA (282 aa)) is E3 ubiquitin-protein ligase catalytic domain. In terms of domain architecture, NEL spans 295-574 (PLADAVTAWF…YRQLTDEVLA (280 aa)). Residue C379 is the Glycyl thioester intermediate of the active site.

The protein belongs to the LRR-containing bacterial E3 ligase family. Post-translationally, ubiquitinated in the presence of host E1 ubiquitin-activating enzyme, E2 ubiquitin-conjugating enzyme and ubiquitin.

The protein resides in the secreted. It localises to the host cytoplasm. It carries out the reaction S-ubiquitinyl-[E2 ubiquitin-conjugating enzyme]-L-cysteine + [acceptor protein]-L-lysine = [E2 ubiquitin-conjugating enzyme]-L-cysteine + N(6)-ubiquitinyl-[acceptor protein]-L-lysine.. In terms of biological role, effector proteins function to alter host cell physiology and promote bacterial survival in host tissues. This protein is an E3 ubiquitin ligase that interferes with host's ubiquitination pathway. In Shigella flexneri, this protein is Probable E3 ubiquitin-protein ligase ipaH4.5 (ipaH4.5).